Consider the following 129-residue polypeptide: Small ribosomal subunit protein uS13m (129 aa).

Residues 92-129 are disordered; that stretch reads HQDGSPLRGQRTHTNARTARKQIRKGNERRLPKEQATD. The segment covering 116 to 129 has biased composition (basic and acidic residues); the sequence is KGNERRLPKEQATD.

Belongs to the universal ribosomal protein uS13 family. As to quaternary structure, part of the small ribosomal subunit.

It localises to the mitochondrion. In terms of biological role, located at the top of the head of the small subunit, it contacts several helices of the 18S rRNA. The sequence is that of Small ribosomal subunit protein uS13m (RPS13) from Zea mays (Maize).